The sequence spans 540 residues: Aquaporin-5 (540 aa).

The segment at 1–224 (MSGEGTDLPT…ESIDGYNYES (224 aa)) is disordered. At 1 to 263 (MSGEGTDLPT…QWMNSNFKNH (263 aa)) the chain is on the cytoplasmic side. Positions 25–44 (PGSSQQQLVPIAHTISSPSK) are enriched in polar residues. Composition is skewed to basic and acidic residues over residues 119 to 133 (RARE…EREN), 140 to 155 (RARD…ERSR), 174 to 194 (YFDD…KGMR), and 204 to 214 (SGEKVRRKSTD). The helical transmembrane segment at 264–284 (FVATIGEFVGTTMFLFFAFAG) threads the bilayer. At 285–308 (TQVANIDSNTVNTTTGAATGFNIA) the chain is on the extracellular side. N-linked (GlcNAc...) asparagine glycosylation is present at asparagine 296. Residues 309–329 (VQLYIAVIFGFSLMVNVWIFF) traverse the membrane as a helical segment. Residues 330-332 (RIS) lie on the Cytoplasmic side of the membrane. The chain crosses the membrane as a helical span at residues 333–353 (GGLFNPAVTLGMVLVGAIPIP). The Extracellular segment spans residues 354–356 (RAA). A helical membrane pass occupies residues 357-377 (CLFFAQILGGIAASGMVLGLF). The Cytoplasmic segment spans residues 378–393 (PTTFNVRTTLGASTST). A helical membrane pass occupies residues 394 to 414 (VQGVFIEAILTAELVFTIFML). Topologically, residues 415-420 (AKEKHK) are extracellular. Residues 421 to 441 (ATFIAPVGIGLALFIAEMVGV) form a helical membrane-spanning segment. At 442–467 (YYTGGSLNPARSFGPCVVSGSFDKEH) the chain is on the cytoplasmic side. Residues 468–488 (WIYWIGPITGTFIAVFFYKFI) traverse the membrane as a helical segment. The Extracellular portion of the chain corresponds to 489 to 540 (KMLEYEMANPGQDGDAKNDPTQNEKKREQILEERNRRYEKRNGSLRPGSRLS). Residues 499 to 540 (GQDGDAKNDPTQNEKKREQILEERNRRYEKRNGSLRPGSRLS) are disordered. Residues 502–530 (GDAKNDPTQNEKKREQILEERNRRYEKRN) are compositionally biased toward basic and acidic residues. Asparagine 530 is a glycosylation site (N-linked (GlcNAc...) asparagine).

This sequence belongs to the MIP/aquaporin (TC 1.A.8) family.

The protein resides in the membrane. The enzyme catalyses H2O(in) = H2O(out). Functionally, water channel required to facilitate the transport of water across membranes. May play a role in the vegetative growth. The protein is Aquaporin-5 of Botryotinia fuckeliana (strain B05.10) (Noble rot fungus).